Here is a 189-residue protein sequence, read N- to C-terminus: GMP synthase [glutamine-hydrolyzing] subunit A (189 aa).

Positions 5 to 189 constitute a Glutamine amidotransferase type-1 domain; sequence KILVVNNYGQ…MNFFEVCDLY (185 aa). Cysteine 79 serves as the catalytic Nucleophile. Active-site residues include histidine 166 and glutamate 168.

As to quaternary structure, heterodimer composed of a glutamine amidotransferase subunit (A) and a GMP-binding subunit (B).

The enzyme catalyses XMP + L-glutamine + ATP + H2O = GMP + L-glutamate + AMP + diphosphate + 2 H(+). It participates in purine metabolism; GMP biosynthesis; GMP from XMP (L-Gln route): step 1/1. Its function is as follows. Catalyzes the synthesis of GMP from XMP. The protein is GMP synthase [glutamine-hydrolyzing] subunit A of Methanosarcina mazei (strain ATCC BAA-159 / DSM 3647 / Goe1 / Go1 / JCM 11833 / OCM 88) (Methanosarcina frisia).